Here is a 209-residue protein sequence, read N- to C-terminus: Kynurenine formamidase (209 aa).

W20 lines the substrate pocket. Residues H50, H54, and D56 each contribute to the Zn(2+) site. The active-site Proton donor/acceptor is the H60. Zn(2+) contacts are provided by H161 and E173.

It belongs to the Cyclase 1 superfamily. KynB family. Homodimer. Requires Zn(2+) as cofactor.

It catalyses the reaction N-formyl-L-kynurenine + H2O = L-kynurenine + formate + H(+). It functions in the pathway amino-acid degradation; L-tryptophan degradation via kynurenine pathway; L-kynurenine from L-tryptophan: step 2/2. Its function is as follows. Catalyzes the hydrolysis of N-formyl-L-kynurenine to L-kynurenine, the second step in the kynurenine pathway of tryptophan degradation. This Bacillus thuringiensis (strain Al Hakam) protein is Kynurenine formamidase.